A 444-amino-acid polypeptide reads, in one-letter code: MASSAGRDKLRSRGQRVFAFGSSTPRDLSHMSKVPQNLRNYDAKSVDKSPSDAPSLHDYIVKARSLSREACDSRNQFVFGSSTPRTLAHLDKIPHKQRVYDAKIPKKNTTHSDFKAAPIRFNAPPVPITKPAKKEENRHVITSKDDDIASEPDIVQDREEFMNEMKKHKIELEKKKSLGKNDSKTTIEIPTPKAAETQQEHVKFAHAPEIAGNSQKAVRIQSETQEEAPVAVKNLSANKMNDQIEVSQLMNEITPESVPAVESLDNQKNANVVGDLLAKVQKVADDTIDKSKTTVAADVAKMSGALQKAEEEVVQTIDQTVKNIKSNVNEVKKDVEKNIAEKVDDITKELEKSAKSLEETTDKIGSKIDNTSQAIKSNLEEASLKTEKSVNDAVKSGEKLIGDLASEAKKTFDSAEQKLDAKFSKIGSTADSTLEDVKNGLRHF.

Residues 1-11 (MASSAGRDKLR) are compositionally biased toward basic and acidic residues. A disordered region spans residues 1–35 (MASSAGRDKLRSRGQRVFAFGSSTPRDLSHMSKVP).

This is an uncharacterized protein from Caenorhabditis elegans.